The following is a 384-amino-acid chain: S-adenosylmethionine synthase (384 aa).

His-15 serves as a coordination point for ATP. Residue Asp-17 participates in Mg(2+) binding. Glu-43 is a K(+) binding site. Residues Glu-56 and Gln-99 each contribute to the L-methionine site. The tract at residues 99–109 (QSADINQGVDR) is flexible loop. Residues 164 to 166 (DAK), 230 to 231 (RF), Asp-239, 245 to 246 (RK), Ala-262, and Lys-266 contribute to the ATP site. Position 239 (Asp-239) interacts with L-methionine. Lys-270 contacts L-methionine.

It belongs to the AdoMet synthase family. Homotetramer; dimer of dimers. Mg(2+) serves as cofactor. K(+) is required as a cofactor.

Its subcellular location is the cytoplasm. It carries out the reaction L-methionine + ATP + H2O = S-adenosyl-L-methionine + phosphate + diphosphate. The protein operates within amino-acid biosynthesis; S-adenosyl-L-methionine biosynthesis; S-adenosyl-L-methionine from L-methionine: step 1/1. In terms of biological role, catalyzes the formation of S-adenosylmethionine (AdoMet) from methionine and ATP. The overall synthetic reaction is composed of two sequential steps, AdoMet formation and the subsequent tripolyphosphate hydrolysis which occurs prior to release of AdoMet from the enzyme. This chain is S-adenosylmethionine synthase, found in Haemophilus influenzae (strain PittGG).